Here is a 244-residue protein sequence, read N- to C-terminus: 2-C-methyl-D-erythritol 4-phosphate cytidylyltransferase (244 aa).

It belongs to the IspD/TarI cytidylyltransferase family. IspD subfamily.

The catalysed reaction is 2-C-methyl-D-erythritol 4-phosphate + CTP + H(+) = 4-CDP-2-C-methyl-D-erythritol + diphosphate. Its pathway is isoprenoid biosynthesis; isopentenyl diphosphate biosynthesis via DXP pathway; isopentenyl diphosphate from 1-deoxy-D-xylulose 5-phosphate: step 2/6. In terms of biological role, catalyzes the formation of 4-diphosphocytidyl-2-C-methyl-D-erythritol from CTP and 2-C-methyl-D-erythritol 4-phosphate (MEP). This chain is 2-C-methyl-D-erythritol 4-phosphate cytidylyltransferase, found in Corynebacterium diphtheriae (strain ATCC 700971 / NCTC 13129 / Biotype gravis).